Here is a 604-residue protein sequence, read N- to C-terminus: Putative O-acetyltransferase SAR0937 (604 aa).

The next 11 helical transmembrane spans lie at 15–35, 43–63, 85–105, 150–170, 176–196, 212–232, 240–260, 267–287, 310–330, 332–352, and 377–397; these read YMPGLDGLRAIAVLGIIIYHL, GFLGVDTFFVISGYLITSLLL, LLPAVIVLLMVVGTATLLLKS, AIEEQFYIFFPVILVTLLLTI, IGFIFWGVSIISLGLMMFIYS, LQTLLLGVILAFLWPPFKLKN, YVIDSIGSLSFIVLILLFFII, IYDGGFYLISILTLFIIASVV, YSLYLWHFAVISFVHSYYVDG, IPVYVYFIDISLTIIFAELSY, and FIRMVIVVTLLIPFMLILVGA. Residues S459, D581, and H584 contribute to the active site.

The protein belongs to the acyltransferase 3 family.

The protein resides in the cell membrane. The chain is Putative O-acetyltransferase SAR0937 from Staphylococcus aureus (strain MRSA252).